Here is a 182-residue protein sequence, read N- to C-terminus: Probable nicotinate-nucleotide adenylyltransferase (182 aa).

It belongs to the NadD family.

It catalyses the reaction nicotinate beta-D-ribonucleotide + ATP + H(+) = deamido-NAD(+) + diphosphate. Its pathway is cofactor biosynthesis; NAD(+) biosynthesis; deamido-NAD(+) from nicotinate D-ribonucleotide: step 1/1. Functionally, catalyzes the reversible adenylation of nicotinate mononucleotide (NaMN) to nicotinic acid adenine dinucleotide (NaAD). In Aliarcobacter butzleri (strain RM4018) (Arcobacter butzleri), this protein is Probable nicotinate-nucleotide adenylyltransferase.